The chain runs to 297 residues: 4-hydroxy-tetrahydrodipicolinate synthase (297 aa).

Pyruvate is bound at residue Thr55. Tyr144 (proton donor/acceptor) is an active-site residue. Lys172 serves as the catalytic Schiff-base intermediate with substrate. Ile213 contacts pyruvate.

This sequence belongs to the DapA family. As to quaternary structure, homotetramer; dimer of dimers.

It localises to the cytoplasm. The catalysed reaction is L-aspartate 4-semialdehyde + pyruvate = (2S,4S)-4-hydroxy-2,3,4,5-tetrahydrodipicolinate + H2O + H(+). It functions in the pathway amino-acid biosynthesis; L-lysine biosynthesis via DAP pathway; (S)-tetrahydrodipicolinate from L-aspartate: step 3/4. In terms of biological role, catalyzes the condensation of (S)-aspartate-beta-semialdehyde [(S)-ASA] and pyruvate to 4-hydroxy-tetrahydrodipicolinate (HTPA). The chain is 4-hydroxy-tetrahydrodipicolinate synthase from Lactococcus lactis subsp. cremoris (strain SK11).